The primary structure comprises 513 residues: ATP synthase subunit alpha (513 aa).

169–176 (GDRQTGKT) is an ATP binding site.

Belongs to the ATPase alpha/beta chains family. As to quaternary structure, F-type ATPases have 2 components, CF(1) - the catalytic core - and CF(0) - the membrane proton channel. CF(1) has five subunits: alpha(3), beta(3), gamma(1), delta(1), epsilon(1). CF(0) has three main subunits: a(1), b(2) and c(9-12). The alpha and beta chains form an alternating ring which encloses part of the gamma chain. CF(1) is attached to CF(0) by a central stalk formed by the gamma and epsilon chains, while a peripheral stalk is formed by the delta and b chains.

It localises to the cell inner membrane. It carries out the reaction ATP + H2O + 4 H(+)(in) = ADP + phosphate + 5 H(+)(out). Functionally, produces ATP from ADP in the presence of a proton gradient across the membrane. The alpha chain is a regulatory subunit. This is ATP synthase subunit alpha from Glaesserella parasuis serovar 5 (strain SH0165) (Haemophilus parasuis).